The primary structure comprises 407 residues: 5-aminolevulinate synthase 2 (407 aa).

2 residues coordinate substrate: arginine 21 and serine 137. Pyridoxal 5'-phosphate is bound by residues serine 189, histidine 217, and threonine 245. The active site involves lysine 248. N6-(pyridoxal phosphate)lysine is present on lysine 248. Positions 277 and 278 each coordinate pyridoxal 5'-phosphate. Residue threonine 363 coordinates substrate.

This sequence belongs to the class-II pyridoxal-phosphate-dependent aminotransferase family. Homodimer. Pyridoxal 5'-phosphate serves as cofactor.

It carries out the reaction succinyl-CoA + glycine + H(+) = 5-aminolevulinate + CO2 + CoA. It participates in porphyrin-containing compound metabolism; protoporphyrin-IX biosynthesis; 5-aminolevulinate from glycine: step 1/1. The polypeptide is 5-aminolevulinate synthase 2 (hemT) (Cereibacter sphaeroides (strain ATCC 17023 / DSM 158 / JCM 6121 / CCUG 31486 / LMG 2827 / NBRC 12203 / NCIMB 8253 / ATH 2.4.1.) (Rhodobacter sphaeroides)).